The sequence spans 484 residues: Arachin Ahy-3 (484 aa).

Residues 1 to 20 (MAKLLALSVCFCFLVLGASS) form the signal peptide. 2 disulfide bridges follow: Cys32–Cys65 and Cys108–Cys305. The region spanning 35-253 (QRLNAQRPDN…GFQVNEDIVR (219 aa)) is the Cupin type-1 1 domain. Residues 208-233 (QQRSGRQSPKGEEQEQEQENEGGNVF) form a disordered region. Positions 295–298 (DFNN) are excised as a propeptide. The 150-residue stretch at 311 to 460 (MNIGKSTSAD…SYGLQYEQAR (150 aa)) folds into the Cupin type-1 2 domain. Residues 479–484 (MIRTVA) constitute a propeptide that is removed on maturation.

It belongs to the 11S seed storage protein (globulins) family. As to quaternary structure, hexamer; each subunit is composed of an acidic and a basic chain derived from a single precursor and linked by a disulfide bond.

The sequence is that of Arachin Ahy-3 from Arachis hypogaea (Peanut).